Consider the following 185-residue polypeptide: Elongation factor P (185 aa).

This sequence belongs to the elongation factor P family.

It is found in the cytoplasm. It participates in protein biosynthesis; polypeptide chain elongation. Its function is as follows. Involved in peptide bond synthesis. Stimulates efficient translation and peptide-bond synthesis on native or reconstituted 70S ribosomes in vitro. Probably functions indirectly by altering the affinity of the ribosome for aminoacyl-tRNA, thus increasing their reactivity as acceptors for peptidyl transferase. This is Elongation factor P from Desulfitobacterium hafniense (strain Y51).